A 232-amino-acid chain; its full sequence is Phosphatidylserine decarboxylase proenzyme (232 aa).

Catalysis depends on Ser-190, which acts as the Schiff-base intermediate with substrate; via pyruvic acid. Ser-190 is subject to Pyruvic acid (Ser); by autocatalysis.

It belongs to the phosphatidylserine decarboxylase family. PSD-A subfamily. Heterodimer of a large membrane-associated beta subunit and a small pyruvoyl-containing alpha subunit. Pyruvate is required as a cofactor. Post-translationally, is synthesized initially as an inactive proenzyme. Formation of the active enzyme involves a self-maturation process in which the active site pyruvoyl group is generated from an internal serine residue via an autocatalytic post-translational modification. Two non-identical subunits are generated from the proenzyme in this reaction, and the pyruvate is formed at the N-terminus of the alpha chain, which is derived from the carboxyl end of the proenzyme. The post-translation cleavage follows an unusual pathway, termed non-hydrolytic serinolysis, in which the side chain hydroxyl group of the serine supplies its oxygen atom to form the C-terminus of the beta chain, while the remainder of the serine residue undergoes an oxidative deamination to produce ammonia and the pyruvoyl prosthetic group on the alpha chain.

The protein localises to the cell membrane. The enzyme catalyses a 1,2-diacyl-sn-glycero-3-phospho-L-serine + H(+) = a 1,2-diacyl-sn-glycero-3-phosphoethanolamine + CO2. It functions in the pathway phospholipid metabolism; phosphatidylethanolamine biosynthesis; phosphatidylethanolamine from CDP-diacylglycerol: step 2/2. Functionally, catalyzes the formation of phosphatidylethanolamine (PtdEtn) from phosphatidylserine (PtdSer). The polypeptide is Phosphatidylserine decarboxylase proenzyme (Rhodopseudomonas palustris (strain BisB5)).